A 196-amino-acid chain; its full sequence is ATP-dependent Clp protease proteolytic subunit (196 aa).

The active-site Nucleophile is S101. The active site involves H126.

Belongs to the peptidase S14 family. As to quaternary structure, component of the chloroplastic Clp protease core complex.

It is found in the plastid. It localises to the chloroplast stroma. The catalysed reaction is Hydrolysis of proteins to small peptides in the presence of ATP and magnesium. alpha-casein is the usual test substrate. In the absence of ATP, only oligopeptides shorter than five residues are hydrolyzed (such as succinyl-Leu-Tyr-|-NHMec, and Leu-Tyr-Leu-|-Tyr-Trp, in which cleavage of the -Tyr-|-Leu- and -Tyr-|-Trp bonds also occurs).. In terms of biological role, cleaves peptides in various proteins in a process that requires ATP hydrolysis. Has a chymotrypsin-like activity. Plays a major role in the degradation of misfolded proteins. This is ATP-dependent Clp protease proteolytic subunit from Nicotiana tabacum (Common tobacco).